Consider the following 542-residue polypeptide: Phenylalanine--tRNA ligase beta subunit (542 aa).

Residues Leu-269–Pro-344 form the B5 domain. Mg(2+) is bound by residues Asp-322, Asp-328, Glu-331, and Glu-332.

Belongs to the phenylalanyl-tRNA synthetase beta subunit family. Type 2 subfamily. Tetramer of two alpha and two beta subunits. It depends on Mg(2+) as a cofactor.

The protein resides in the cytoplasm. The catalysed reaction is tRNA(Phe) + L-phenylalanine + ATP = L-phenylalanyl-tRNA(Phe) + AMP + diphosphate + H(+). The sequence is that of Phenylalanine--tRNA ligase beta subunit from Sulfolobus acidocaldarius (strain ATCC 33909 / DSM 639 / JCM 8929 / NBRC 15157 / NCIMB 11770).